The primary structure comprises 447 residues: tRNA-2-methylthio-N(6)-dimethylallyladenosine synthase (447 aa).

Positions 3–120 constitute an MTTase N-terminal domain; it reads KKLYIKTNGC…LPALLNERLE (118 aa). The [4Fe-4S] cluster site is built by C12, C49, C83, C157, C161, and C164. Residues 143–375 enclose the Radical SAM core domain; it reads RAEGPTAFVS…QNRLLMNAAR (233 aa). Residues 378 to 441 enclose the TRAM domain; the sequence is ESMIGSKQKI…PNSLRGRLLE (64 aa).

This sequence belongs to the methylthiotransferase family. MiaB subfamily. As to quaternary structure, monomer. Requires [4Fe-4S] cluster as cofactor.

It is found in the cytoplasm. It carries out the reaction N(6)-dimethylallyladenosine(37) in tRNA + (sulfur carrier)-SH + AH2 + 2 S-adenosyl-L-methionine = 2-methylsulfanyl-N(6)-dimethylallyladenosine(37) in tRNA + (sulfur carrier)-H + 5'-deoxyadenosine + L-methionine + A + S-adenosyl-L-homocysteine + 2 H(+). Its function is as follows. Catalyzes the methylthiolation of N6-(dimethylallyl)adenosine (i(6)A), leading to the formation of 2-methylthio-N6-(dimethylallyl)adenosine (ms(2)i(6)A) at position 37 in tRNAs that read codons beginning with uridine. This Legionella pneumophila (strain Paris) protein is tRNA-2-methylthio-N(6)-dimethylallyladenosine synthase.